A 207-amino-acid polypeptide reads, in one-letter code: Holliday junction branch migration complex subunit RuvA (207 aa).

Positions 1 to 71 (MIVSIAGKLV…RLTPRLIGFS (71 aa)) are domain I. Residues 72–149 (TLPERQFFDL…RFALMVAGGE (78 aa)) form a domain II region. Residues 150–155 (VADAME) are flexible linker. Residues 156-207 (VESPIVSDTYDALVTLGHSESDARKLIDETLATGKKFKDTESLLTAIYQRSK) are domain III.

It belongs to the RuvA family. As to quaternary structure, homotetramer. Forms an RuvA(8)-RuvB(12)-Holliday junction (HJ) complex. HJ DNA is sandwiched between 2 RuvA tetramers; dsDNA enters through RuvA and exits via RuvB. An RuvB hexamer assembles on each DNA strand where it exits the tetramer. Each RuvB hexamer is contacted by two RuvA subunits (via domain III) on 2 adjacent RuvB subunits; this complex drives branch migration. In the full resolvosome a probable DNA-RuvA(4)-RuvB(12)-RuvC(2) complex forms which resolves the HJ.

It localises to the cytoplasm. The RuvA-RuvB-RuvC complex processes Holliday junction (HJ) DNA during genetic recombination and DNA repair, while the RuvA-RuvB complex plays an important role in the rescue of blocked DNA replication forks via replication fork reversal (RFR). RuvA specifically binds to HJ cruciform DNA, conferring on it an open structure. The RuvB hexamer acts as an ATP-dependent pump, pulling dsDNA into and through the RuvAB complex. HJ branch migration allows RuvC to scan DNA until it finds its consensus sequence, where it cleaves and resolves the cruciform DNA. This Rhodopirellula baltica (strain DSM 10527 / NCIMB 13988 / SH1) protein is Holliday junction branch migration complex subunit RuvA.